The following is a 538-amino-acid chain: CTP synthase (538 aa).

Positions 1 to 265 (MARYIFVTGG…DLQVLNYFKL (265 aa)) are amidoligase domain. S13 provides a ligand contact to CTP. UTP is bound at residue S13. ATP is bound by residues 14 to 19 (SLGKGL) and D71. The Mg(2+) site is built by D71 and E139. CTP-binding positions include 146–148 (DIE), 186–191 (KTKPTQ), and K222. UTP-binding positions include 186–191 (KTKPTQ) and K222. One can recognise a Glutamine amidotransferase type-1 domain in the interval 291–538 (NIAIIGKYVE…SFIKAAKNHK (248 aa)). G353 is a binding site for L-glutamine. The active-site Nucleophile; for glutamine hydrolysis is C380. L-glutamine is bound by residues 381-384 (YGMQ), E404, and R468. Catalysis depends on residues H513 and E515.

It belongs to the CTP synthase family. In terms of assembly, homotetramer.

The catalysed reaction is UTP + L-glutamine + ATP + H2O = CTP + L-glutamate + ADP + phosphate + 2 H(+). It carries out the reaction L-glutamine + H2O = L-glutamate + NH4(+). It catalyses the reaction UTP + NH4(+) + ATP = CTP + ADP + phosphate + 2 H(+). It functions in the pathway pyrimidine metabolism; CTP biosynthesis via de novo pathway; CTP from UDP: step 2/2. Allosterically activated by GTP, when glutamine is the substrate; GTP has no effect on the reaction when ammonia is the substrate. The allosteric effector GTP functions by stabilizing the protein conformation that binds the tetrahedral intermediate(s) formed during glutamine hydrolysis. Inhibited by the product CTP, via allosteric rather than competitive inhibition. Catalyzes the ATP-dependent amination of UTP to CTP with either L-glutamine or ammonia as the source of nitrogen. Regulates intracellular CTP levels through interactions with the four ribonucleotide triphosphates. This is CTP synthase from Pelagibacter ubique (strain HTCC1062).